The sequence spans 430 residues: Trigger factor (430 aa).

Positions 163–248 constitute a PPIase FKBP-type domain; it reads GNIAIIDFKG…IKDIKVKELP (86 aa).

This sequence belongs to the FKBP-type PPIase family. Tig subfamily.

The protein localises to the cytoplasm. The enzyme catalyses [protein]-peptidylproline (omega=180) = [protein]-peptidylproline (omega=0). In terms of biological role, involved in protein export. Acts as a chaperone by maintaining the newly synthesized protein in an open conformation. Functions as a peptidyl-prolyl cis-trans isomerase. This Clostridium botulinum (strain Langeland / NCTC 10281 / Type F) protein is Trigger factor.